Reading from the N-terminus, the 424-residue chain is MSDLLSRTHAIALDAADPLRPLRNEFLIPRHGGGEQTYFVGNSLGLQPRGAQAAVQEVMKQWGELAVEGHFTGPTQWLSYHRLVSAQLARVVGALPSEVVAMNTLSVNLHLMMVSFYRPTAQRPVILMEAGAFPTDRHAVEAQIRFHGFDPAECLVEVQPDEANGTISLTAIERAIAEHGPRLALVLWPGVQYRTGQAFDLDAITRAARLQGARIGFDLAHSVGNLPLRLHDVAPDFAVWCHYKYLNSGPGAVAGAFVHERHHRDTTLPRFAGWWGHEEATRFQMAPQFTPAIGAEGWQLSNPPILGLAPLRASLDLFERAGMEALRSKSLALTGMLEALVRARLSGVLDIITPAEPQRRGCQLSLRVIGGRERGRALFEHLRGIGVLGDWREPDVIRISPTPLYNRYLDVHHFVEEVEAWAGL.

Residues leucine 105, serine 106, 133–136 (FPTD), aspartate 218, histidine 221, and tyrosine 243 each bind pyridoxal 5'-phosphate. An N6-(pyridoxal phosphate)lysine modification is found at lysine 244. Residues tryptophan 274 and asparagine 302 each coordinate pyridoxal 5'-phosphate.

It belongs to the kynureninase family. As to quaternary structure, homodimer. It depends on pyridoxal 5'-phosphate as a cofactor.

The catalysed reaction is L-kynurenine + H2O = anthranilate + L-alanine + H(+). It catalyses the reaction 3-hydroxy-L-kynurenine + H2O = 3-hydroxyanthranilate + L-alanine + H(+). It participates in amino-acid degradation; L-kynurenine degradation; L-alanine and anthranilate from L-kynurenine: step 1/1. It functions in the pathway cofactor biosynthesis; NAD(+) biosynthesis; quinolinate from L-kynurenine: step 2/3. Functionally, catalyzes the cleavage of L-kynurenine (L-Kyn) and L-3-hydroxykynurenine (L-3OHKyn) into anthranilic acid (AA) and 3-hydroxyanthranilic acid (3-OHAA), respectively. In Stenotrophomonas maltophilia (strain K279a), this protein is Kynureninase.